A 419-amino-acid polypeptide reads, in one-letter code: MSAASSFKSEFLRTLEARGYIHQITHADELDTAAQGGPIVAYIGFDATAPSLHVGSLIQIMLLRRLQQAGHKPIVLMGGGTTKVGDPTGKDESRKLLSDADIQANIAGIKTVFSKFLTFGDGPTDAIMVDNDVWLSKFGYVQFLREYGVHFTVNRMLAFDSVKLRLEREQPMTFLEFNYMLMQAVDFLELNRAHGCVLQMGGSDQWGNILNGVELTRRVDQKSAFGLTTPLLATASGAKMGKTAAGAVWLNAEQLSPYDYWQFWRNTEDADVGRFLKLFTDLPLDRIAELEALEGAQINEAKKVLADEATRMAHGEEEARKARDAAEKAFEQGALSADLPTYEIAAADLDAGVVLAALFADAGLAGSRGEARRLAQGGGLKVNDKAEADANRLITAADLVEGVVKLAAGKKKIVLVKPV.

L-tyrosine is bound at residue tyrosine 42. The short motif at 47–56 (ATAPSLHVGS) is the 'HIGH' region element. Residues tyrosine 179 and glutamine 183 each contribute to the L-tyrosine site. The short motif at 239–243 (KMGKT) is the 'KMSKS' region element. An ATP-binding site is contributed by lysine 242. The S4 RNA-binding domain occupies 353 to 418 (VVLAALFADA…GKKKIVLVKP (66 aa)).

This sequence belongs to the class-I aminoacyl-tRNA synthetase family. TyrS type 1 subfamily. Homodimer.

The protein localises to the cytoplasm. It catalyses the reaction tRNA(Tyr) + L-tyrosine + ATP = L-tyrosyl-tRNA(Tyr) + AMP + diphosphate + H(+). In terms of biological role, catalyzes the attachment of tyrosine to tRNA(Tyr) in a two-step reaction: tyrosine is first activated by ATP to form Tyr-AMP and then transferred to the acceptor end of tRNA(Tyr). The chain is Tyrosine--tRNA ligase from Caulobacter vibrioides (strain ATCC 19089 / CIP 103742 / CB 15) (Caulobacter crescentus).